A 230-amino-acid polypeptide reads, in one-letter code: MLNTYITNILGIKLTEQQNGQFDAYYNLLVAYNKHTNLTRITSRDDADIKHFLDSVLISKLVDLNKVVTLCDMGAGAGFPSIPLLIVFPNIQVTIVESQIKRVQFLQELKQALGLEFNIVHDRAENFSSKNYQQFDIVTARALGELRLILEFGVPMLKVGGHFIAPKGSKFEEELTSAAHAIKVLNVELITQDLFELPLESGFRANLLFRKEKHVSGYPRPFPIIKKKPL.

S-adenosyl-L-methionine-binding positions include glycine 74, phenylalanine 79, 124-125 (AE), and arginine 141.

This sequence belongs to the methyltransferase superfamily. RNA methyltransferase RsmG family.

It is found in the cytoplasm. Its function is as follows. Specifically methylates the N7 position of a guanine in 16S rRNA. In Acholeplasma laidlawii (strain PG-8A), this protein is Ribosomal RNA small subunit methyltransferase G.